We begin with the raw amino-acid sequence, 433 residues long: Shufflon protein C' (433 aa).

The constant region stretch occupies residues 1-361; the sequence is MKKYDRGWAS…TGAILSCQSG (361 aa). The tract at residues 362–433 is variable region; it reads RWSGGNKINY…HVDAYCCPFN (72 aa).

The polypeptide is Shufflon protein C' (Escherichia coli).